We begin with the raw amino-acid sequence, 140 residues long: GTP-dependent dephospho-CoA kinase (140 aa).

Asp21, Val22, Val23, Asp40, Lys42, and Glu92 together coordinate GTP.

The protein belongs to the GTP-dependent DPCK family.

The catalysed reaction is 3'-dephospho-CoA + GTP = GDP + CoA + H(+). It functions in the pathway cofactor biosynthesis; coenzyme A biosynthesis. Functionally, catalyzes the GTP-dependent phosphorylation of the 3'-hydroxyl group of dephosphocoenzyme A to form coenzyme A (CoA). The sequence is that of GTP-dependent dephospho-CoA kinase from Pyrobaculum aerophilum (strain ATCC 51768 / DSM 7523 / JCM 9630 / CIP 104966 / NBRC 100827 / IM2).